We begin with the raw amino-acid sequence, 282 residues long: Dihydroorotate dehydrogenase B (NAD(+)), electron transfer subunit homolog (282 aa).

In terms of domain architecture, FAD-binding FR-type spans 2 to 100; that stretch reads GGTALNEIVK…VGPLGNPSEI (99 aa). [2Fe-2S] cluster-binding residues include cysteine 225, cysteine 228, and cysteine 240.

It belongs to the PyrK family. [2Fe-2S] cluster is required as a cofactor. The cofactor is FAD.

The chain is Dihydroorotate dehydrogenase B (NAD(+)), electron transfer subunit homolog from Thermotoga maritima (strain ATCC 43589 / DSM 3109 / JCM 10099 / NBRC 100826 / MSB8).